Reading from the N-terminus, the 214-residue chain is Large ribosomal subunit protein uL16 (214 aa).

A Citrulline modification is found at Arg-32. Lys-175 is covalently cross-linked (Glycyl lysine isopeptide (Lys-Gly) (interchain with G-Cter in SUMO2)). Lys-188 participates in a covalent cross-link: Glycyl lysine isopeptide (Lys-Gly) (interchain with G-Cter in ubiquitin).

Belongs to the universal ribosomal protein uL16 family. As to quaternary structure, component of the large ribosomal subunit. Mature ribosomes consist of a small (40S) and a large (60S) subunit. The 40S subunit contains about 33 different proteins and 1 molecule of RNA (18S). The 60S subunit contains about 49 different proteins and 3 molecules of RNA (28S, 5.8S and 5S). Citrullinated by PADI4. Post-translationally, ufmylated by UFL1.

The protein localises to the cytoplasm. Its function is as follows. Component of the large ribosomal subunit. Plays a role in the formation of actively translating ribosomes. May play a role in the embryonic brain development. This chain is Large ribosomal subunit protein uL16 (RPL10), found in Oryctolagus cuniculus (Rabbit).